Reading from the N-terminus, the 64-residue chain is Large ribosomal subunit protein bL35 (64 aa).

Residues 1 to 25 form a disordered region; sequence MPKMKTHRGAAKRLKKTGTGKLKRA.

It belongs to the bacterial ribosomal protein bL35 family.

The protein is Large ribosomal subunit protein bL35 of Clostridioides difficile (strain 630) (Peptoclostridium difficile).